Reading from the N-terminus, the 787-residue chain is Protein smoothened (787 aa).

Residues 1–27 form the signal peptide; it reads MAAARPARGPELPLLGLLLLLLLGDPG. At 28–233 the chain is on the extracellular side; the sequence is RGAASSGNAT…EAEHQDMHSY (206 aa). The segment at 30-60 is disordered; it reads AASSGNATGPGPRSAGGSARRSAAVTGPPPP. N35 is a glycosylation site (N-linked (GlcNAc...) asparagine). Over residues 38–53 the composition is skewed to low complexity; sequence GPGPRSAGGSARRSAA. 5 disulfides stabilise this stretch: C64–C178, C70–C134, C78–C127, C118–C154, and C147–C169. One can recognise an FZ domain in the interval 65 to 181; it reads GRAAPCEPLR…DRFPEGCTNE (117 aa). D95 is a cholesterol binding site. The N-linked (GlcNAc...) asparagine glycan is linked to N188. 2 disulfides stabilise this stretch: C193-C213 and C217-C295. Residues 234–254 traverse the membrane as a helical segment; the sequence is IAAFGAVTGLCTLFTLATFVA. Over 255-262 the chain is Cytoplasmic; the sequence is DWRNSNRY. A helical transmembrane segment spans residues 263–283; it reads PAVILFYVNACFFVGSIGWLA. Over 284 to 314 the chain is Extracellular; the sequence is QFMDGARREIVCRADGTMRLGEPTSNETLSC. A glycan (N-linked (GlcNAc...) asparagine) is linked at N309. C314 and C390 are joined by a disulfide. The chain crosses the membrane as a helical span at residues 315-335; the sequence is VIIFVIVYYALMAGVVWFVVL. Topologically, residues 336-358 are cytoplasmic; the sequence is TYAWHTSFKALGTTYQPLSGKTS. The helical transmembrane segment at 359–379 threads the bilayer; sequence YFHLLTWSLPFVLTVAILAVA. The Extracellular segment spans residues 380 to 402; sequence QVDGDSVSGICFVGYKNYRYRAG. Cholesterol is bound at residue Y394. Residues 403-423 form a helical membrane-spanning segment; it reads FVLAPIGLVLIVGGYFLIRGV. Residues 424–451 are Cytoplasmic-facing; sequence MTLFSIKSNHPGLLSEKAASKINETMLR. A helical transmembrane segment spans residues 452–472; it reads LGIFGFLAFGFVLITFSCHFY. At 473–524 the chain is on the extracellular side; the sequence is DFFNQAEWERSFRDYVLCQANVTIGLPTKQPIPDCEIKNRPSLLVEKINLFA. Residues C490 and C507 are joined by a disulfide bond. Residues 525 to 545 traverse the membrane as a helical segment; the sequence is MFGTGIAMSTWVWTKATLLIW. Residues 538-569 form an interaction with BBS5 and BBS7 region; that stretch reads TKATLLIWRRTWCRLTGQSDDEPKRIKKSKMI. The Cytoplasmic segment spans residues 546-787; it reads RRTWCRLTGQ…TELMDADSDF (242 aa). Residues S556, S574, and S590 each carry the phosphoserine modification. The required for interaction with PRKACA stretch occupies residues 570–653; that stretch reads AKAFSKRHEL…TPVPPEEQAN (84 aa). The segment at 581–593 is interaction with DLG5; sequence QNPGQELSFSMHT. T593 carries the phosphothreonine modification. 2 positions are modified to phosphoserine: S595 and S638. Phosphothreonine occurs at positions 640 and 644. The residue at position 662 (S662) is a Phosphoserine. The segment at 667–704 is disordered; sequence KRLGRKKKRRKRKKEVCPLAPPPELHPPAPAPSTIPRL. Residues 668 to 680 show a composition bias toward basic residues; sequence RLGRKKKRRKRKK. Pro residues predominate over residues 685 to 699; sequence LAPPPELHPPAPAPS.

The protein belongs to the G-protein coupled receptor Fz/Smo family. Homodimer. Interacts (via C-terminus) with protein kinase A catalytic subunit PRKACA; interacts with free PRKACA subunits and the interaction leads to sequestration of PRKACA at the membrane, preventing PRKACA-mediated phosphorylation of GLI transcription factors. Interacts with ARRB2. Interacts with KIF7. Interacts with BBS5 and BBS7; the interactions are indicative for the association of SMO with the BBsome complex to facilitate ciliary localization of SMO. Interacts with DLG5 and SDCBP. Interacts with GAS8/DRC4. In terms of processing, phosphorylation by GRK kinases is required for interaction with protein kinase A catalytic subunit PRKACA.

It is found in the cell membrane. Its subcellular location is the cell projection. It localises to the cilium. G protein-coupled receptor which associates with the patched protein (PTCH) to transduce hedgehog protein signaling. Binding of sonic hedgehog (SHH) to its receptor patched prevents inhibition of smoothened (SMO) by patched. When active, SMO binds to and sequesters protein kinase A catalytic subunit PRKACA at the cell membrane, preventing PRKACA-mediated phosphorylation of GLI transcription factors which releases the GLI proteins from PRKACA-mediated inhibition and allows for transcriptional activation of hedgehog pathway target genes. Required for the accumulation of KIF7, GLI2 and GLI3 in the cilia. Interacts with DLG5 at the ciliary base to induce the accumulation of KIF7 and GLI2 at the ciliary tip for GLI2 activation. This is Protein smoothened (SMO) from Homo sapiens (Human).